The chain runs to 166 residues: Ribosome maturation factor RimM (166 aa).

The PRC barrel domain occupies 94-165; that stretch reads EGEYYLGKLI…TIELKVLDLL (72 aa).

The protein belongs to the RimM family. As to quaternary structure, binds ribosomal protein uS19.

The protein localises to the cytoplasm. Its function is as follows. An accessory protein needed during the final step in the assembly of 30S ribosomal subunit, possibly for assembly of the head region. Essential for efficient processing of 16S rRNA. May be needed both before and after RbfA during the maturation of 16S rRNA. It has affinity for free ribosomal 30S subunits but not for 70S ribosomes. The protein is Ribosome maturation factor RimM of Borrelia garinii subsp. bavariensis (strain ATCC BAA-2496 / DSM 23469 / PBi) (Borreliella bavariensis).